Reading from the N-terminus, the 357-residue chain is Protein Wnt-8c (357 aa).

Positions 1–16 are cleaved as a signal peptide; that stretch reads MRGSTFLLLSIVGIYG. Residues Cys55 and Cys66 are joined by a disulfide bond. The N-linked (GlcNAc...) asparagine glycan is linked to Asn104. 9 disulfides stabilise this stretch: Cys105-Cys113, Cys115-Cys133, Cys181-Cys195, Cys183-Cys190, Cys260-Cys298, Cys276-Cys291, Cys313-Cys328, Cys315-Cys325, and Cys320-Cys321. Residue Ser187 is the site of O-palmitoleoyl serine attachment. 2 N-linked (GlcNAc...) asparagine glycosylation sites follow: Asn263 and Asn282. A glycan (N-linked (GlcNAc...) asparagine) is linked at Asn346.

It belongs to the Wnt family. In terms of processing, palmitoleoylation is required for efficient binding to frizzled receptors. Depalmitoleoylation leads to Wnt signaling pathway inhibition. Post-translationally, proteolytic processing by tiki1 and tiki2 promotes oxidation and formation of large disulfide-bond oligomers, leading to inactivation of wnt8c. As to expression, cells that form rhombomere 4. Hensen node and the neural plate immediately anterior to it.

The protein resides in the secreted. Its subcellular location is the extracellular space. It localises to the extracellular matrix. In terms of biological role, ligand for members of the frizzled family of seven transmembrane receptors. Probable developmental protein. Is likely to signal over only few cell diameters. May be involved in the regulation of axis formation and in the rhombomere specification. The chain is Protein Wnt-8c (WNT8C) from Gallus gallus (Chicken).